A 675-amino-acid polypeptide reads, in one-letter code: UvrABC system protein B (675 aa).

The 386-residue stretch at 32-417 (EGLSDGLAYQ…EHAGQVVEQV (386 aa)) folds into the Helicase ATP-binding domain. Residue 45–52 (GVTGSGKT) participates in ATP binding. The Beta-hairpin motif lies at 98–121 (YYDYYQPEAYVPSRDLFIEKDSAI). The region spanning 436 to 602 (QVDDLMSEIN…QIKKQVKDII (167 aa)) is the Helicase C-terminal domain. A UVR domain is found at 634-669 (IKEIAKLEKAMQQAARDLQFEEAAVLRDRIRNIKEN).

This sequence belongs to the UvrB family. Forms a heterotetramer with UvrA during the search for lesions. Interacts with UvrC in an incision complex.

Its subcellular location is the cytoplasm. In terms of biological role, the UvrABC repair system catalyzes the recognition and processing of DNA lesions. A damage recognition complex composed of 2 UvrA and 2 UvrB subunits scans DNA for abnormalities. Upon binding of the UvrA(2)B(2) complex to a putative damaged site, the DNA wraps around one UvrB monomer. DNA wrap is dependent on ATP binding by UvrB and probably causes local melting of the DNA helix, facilitating insertion of UvrB beta-hairpin between the DNA strands. Then UvrB probes one DNA strand for the presence of a lesion. If a lesion is found the UvrA subunits dissociate and the UvrB-DNA preincision complex is formed. This complex is subsequently bound by UvrC and the second UvrB is released. If no lesion is found, the DNA wraps around the other UvrB subunit that will check the other stand for damage. The chain is UvrABC system protein B from Neisseria meningitidis serogroup A / serotype 4A (strain DSM 15465 / Z2491).